Consider the following 520-residue polypeptide: Sodium-dependent dicarboxylate transporter SdcS (520 aa).

The next 14 helical transmembrane spans lie at 30-50, 55-75, 77-97, 104-124, 160-180, 207-227, 242-262, 298-318, 323-343, 362-382, 399-419, 428-448, 452-472, and 491-511; these read AGQLIGLILGPLLFLLTLLFF, LPWEGVYVLAITLWIATWWIT, AIPIAATSLLPIVLLPLGHIL, SEYGNDIIFLFLGGFILAIAM, SMFVSNTAAVMIMIPIGLAII, IGYAGTIGGLGTLIGTPPLII, FAKWMIVGIPTVIVLLGITWL, KVVQTIFVLASLLWITREFLL, VTSSVADGTIAIFISILLFVI, ELPWGVLILFGGGLALAKGIS, GVSPILIVIVITIFVLFLTEV, MILPILATLSVAVGVHPLLLM, AMAANCAYMLPVGTPPNAIIF, and LISAIIIILVVYYVMPIVLGI.

Belongs to the SLC13A/DASS transporter (TC 2.A.47) family. NADC subfamily.

It is found in the cell membrane. Functionally, mediates the transport of the dicarboxylates fumarate, malate, and succinate across the cytoplasmic membrane via a Na(+)-electrochemical gradient. This chain is Sodium-dependent dicarboxylate transporter SdcS (sdcS), found in Staphylococcus aureus (strain bovine RF122 / ET3-1).